Consider the following 138-residue polypeptide: ATP synthase epsilon chain (138 aa).

This sequence belongs to the ATPase epsilon chain family. As to quaternary structure, F-type ATPases have 2 components, CF(1) - the catalytic core - and CF(0) - the membrane proton channel. CF(1) has five subunits: alpha(3), beta(3), gamma(1), delta(1), epsilon(1). CF(0) has three main subunits: a, b and c.

It localises to the cell membrane. Produces ATP from ADP in the presence of a proton gradient across the membrane. The chain is ATP synthase epsilon chain from Streptococcus gordonii (strain Challis / ATCC 35105 / BCRC 15272 / CH1 / DL1 / V288).